A 361-amino-acid chain; its full sequence is Histidinol-phosphate aminotransferase (361 aa).

Lys219 carries the N6-(pyridoxal phosphate)lysine modification.

The protein belongs to the class-II pyridoxal-phosphate-dependent aminotransferase family. Histidinol-phosphate aminotransferase subfamily. Homodimer. The cofactor is pyridoxal 5'-phosphate.

It catalyses the reaction L-histidinol phosphate + 2-oxoglutarate = 3-(imidazol-4-yl)-2-oxopropyl phosphate + L-glutamate. It participates in amino-acid biosynthesis; L-histidine biosynthesis; L-histidine from 5-phospho-alpha-D-ribose 1-diphosphate: step 7/9. In Cereibacter sphaeroides (strain ATCC 17023 / DSM 158 / JCM 6121 / CCUG 31486 / LMG 2827 / NBRC 12203 / NCIMB 8253 / ATH 2.4.1.) (Rhodobacter sphaeroides), this protein is Histidinol-phosphate aminotransferase.